The sequence spans 69 residues: Large ribosomal subunit protein bL31 (69 aa).

Residues Cys17, Cys19, Cys37, and Cys40 each contribute to the Zn(2+) site.

This sequence belongs to the bacterial ribosomal protein bL31 family. Type A subfamily. In terms of assembly, part of the 50S ribosomal subunit. The cofactor is Zn(2+).

Its function is as follows. Binds the 23S rRNA. The sequence is that of Large ribosomal subunit protein bL31 from Clostridium botulinum (strain Eklund 17B / Type B).